A 351-amino-acid polypeptide reads, in one-letter code: D-alanine--D-alanine ligase (351 aa).

An ATP-grasp domain is found at 135–344; it reads KMAFAQAGLP…FAELVDQLIQ (210 aa). 171–226 lines the ATP pocket; it reads EQRLGYPCFVKPANLGSSVGIAKVRSRSELEKALDSAASYDRRIVIETGVKAREVE. Aspartate 297, glutamate 311, and asparagine 313 together coordinate Mg(2+).

It belongs to the D-alanine--D-alanine ligase family. Mg(2+) is required as a cofactor. Requires Mn(2+) as cofactor.

The protein resides in the cytoplasm. It catalyses the reaction 2 D-alanine + ATP = D-alanyl-D-alanine + ADP + phosphate + H(+). The protein operates within cell wall biogenesis; peptidoglycan biosynthesis. Its function is as follows. Cell wall formation. The sequence is that of D-alanine--D-alanine ligase from Rippkaea orientalis (strain PCC 8801 / RF-1) (Cyanothece sp. (strain PCC 8801)).